A 382-amino-acid polypeptide reads, in one-letter code: Pyrimidine monooxygenase RutA (382 aa).

Residues 68-69 (IK), asparagine 134, glutamate 143, 159-160 (RY), and serine 209 contribute to the FMN site.

Belongs to the NtaA/SnaA/DszA monooxygenase family. RutA subfamily.

It catalyses the reaction uracil + FMNH2 + NADH + O2 = (Z)-3-ureidoacrylate + FMN + NAD(+) + H2O + H(+). It carries out the reaction thymine + FMNH2 + NADH + O2 = (Z)-2-methylureidoacrylate + FMN + NAD(+) + H2O + H(+). Functionally, catalyzes the pyrimidine ring opening between N-3 and C-4 by an unusual flavin hydroperoxide-catalyzed mechanism, adding oxygen atoms in the process to yield ureidoacrylate peracid, that immediately reacts with FMN forming ureidoacrylate and FMN-N(5)-oxide. The FMN-N(5)-oxide reacts spontaneously with NADH to produce FMN. Requires the flavin reductase RutF to regenerate FMN in vivo. This Escherichia coli O150:H5 (strain SE15) protein is Pyrimidine monooxygenase RutA.